We begin with the raw amino-acid sequence, 86 residues long: uncharacterized protein (86 aa).

To M.jannaschii MJ0526.1.

This is an uncharacterized protein from Methanothermobacter thermautotrophicus (strain ATCC 29096 / DSM 1053 / JCM 10044 / NBRC 100330 / Delta H) (Methanobacterium thermoautotrophicum).